Here is a 383-residue protein sequence, read N- to C-terminus: MIATGALLRVLLLLLAFGHSTYGAECDPACDPQHGFCEADNVCRCEPGWEGPLCEKCVTSPGCVNGLCEEPWQCVCKEGWDGKFCEIDIRACTSTPCANNGTCVDLEKGQYECSCTPGFSGKDCQHKAGPCVINGSPCQHGGACVDDEGRASHASCLCPPGFSGNFCEIVTNSCTPNPCENDGVCTDIGGDFRCRCPAGFVDKTCSRPVSNCASGPCLNGGTCLQHTQVSFECLCKPPFMGPTCAKKRGTSPVQVTHLPSGYGLTYRLTPGVHELPVQQPEHHILKVSMKELNKSAPLLTEGQAICFTILGVLTSLVVLGTVAIVFLNKCEAWVSNLRYNHMLRKKKNLLLQYNSGEELAVNIIFPEKIDMTTFNKEAGDEDI.

A signal peptide spans 1–23; sequence MIATGALLRVLLLLLAFGHSTYG. EGF-like domains are found at residues 24–55, 59–86, 88–125, 127–168, 170–206, and 208–245; these read AECDPACDPQHGFCEADNVCRCEPGWEGPLCE, TSPGCVNGLCEEPWQCVCKEGWDGKFCE, DIRACTSTPCANNGTCVDLEKGQYECSCTPGFSGKDCQ, KAGP…NFCE, VTNSCTPNPCENDGVCTDIGGDFRCRCPAGFVDKTCS, and PVSNCASGPCLNGGTCLQHTQVSFECLCKPPFMGPTCA. At 24 to 306 the chain is on the extracellular side; it reads AECDPACDPQ…PLLTEGQAIC (283 aa). Intrachain disulfides connect Cys-26–Cys-37, Cys-30–Cys-43, Cys-45–Cys-54, Cys-63–Cys-68, Cys-76–Cys-85, Cys-92–Cys-103, Cys-97–Cys-113, Cys-115–Cys-124, Cys-131–Cys-144, Cys-138–Cys-156, Cys-158–Cys-167, Cys-174–Cys-185, Cys-179–Cys-194, Cys-196–Cys-205, Cys-212–Cys-223, Cys-217–Cys-233, and Cys-235–Cys-244. Residues 307-327 traverse the membrane as a helical segment; it reads FTILGVLTSLVVLGTVAIVFL. Residues 328-383 are Cytoplasmic-facing; that stretch reads NKCEAWVSNLRYNHMLRKKKNLLLQYNSGEELAVNIIFPEKIDMTTFNKEAGDEDI.

As to quaternary structure, monomer. Interacts with SH3RF2. Glycosylated. In terms of tissue distribution, pancreas and adrenal glands (at protein level).

Its subcellular location is the membrane. It is found in the cytoplasm. May have a role in neuroendocrine differentiation. Inhibits adipocyte differentiation. In Rattus norvegicus (Rat), this protein is Protein delta homolog 1 (Dlk1).